The sequence spans 48 residues: Thiamine thiazole synthase, chloroplastic (48 aa).

Alanine 18 and valine 40 together coordinate substrate.

It belongs to the THI4 family. As to quaternary structure, homooctamer. Requires Fe cation as cofactor.

Its subcellular location is the plastid. The protein localises to the chloroplast. The enzyme catalyses [ADP-thiazole synthase]-L-cysteine + glycine + NAD(+) = [ADP-thiazole synthase]-dehydroalanine + ADP-5-ethyl-4-methylthiazole-2-carboxylate + nicotinamide + 3 H2O + 2 H(+). Functionally, involved in biosynthesis of the thiamine precursor thiazole. Catalyzes the conversion of NAD and glycine to adenosine diphosphate 5-(2-hydroxyethyl)-4-methylthiazole-2-carboxylic acid (ADT), an adenylated thiazole intermediate. The reaction includes an iron-dependent sulfide transfer from a conserved cysteine residue of the protein to a thiazole intermediate. The enzyme can only undergo a single turnover, which suggests it is a suicide enzyme. May have additional roles in adaptation to various stress conditions and in DNA damage tolerance. In Populus euphratica (Euphrates poplar), this protein is Thiamine thiazole synthase, chloroplastic (THI1).